A 300-amino-acid polypeptide reads, in one-letter code: Ribonuclease HIII (300 aa).

The RNase H type-2 domain occupies 83–300 (IPIIGSDEVG…THKAQALLTK (218 aa)). A divalent metal cation contacts are provided by Asp89, Glu90, and Asp194.

It belongs to the RNase HII family. RnhC subfamily. Mn(2+) is required as a cofactor. Requires Mg(2+) as cofactor.

Its subcellular location is the cytoplasm. The enzyme catalyses Endonucleolytic cleavage to 5'-phosphomonoester.. Its function is as follows. Endonuclease that specifically degrades the RNA of RNA-DNA hybrids. The polypeptide is Ribonuclease HIII (Streptococcus pyogenes serotype M2 (strain MGAS10270)).